The chain runs to 407 residues: Glucan 1,3-beta-glucosidase 1 (407 aa).

The first 22 residues, M1–S22, serve as a signal peptide directing secretion. Catalysis depends on E213, which acts as the Proton donor. A disulfide bridge links C295 with C406. The Nucleophile role is filled by E312.

Belongs to the glycosyl hydrolase 5 (cellulase A) family.

The protein resides in the secreted. The catalysed reaction is Successive hydrolysis of beta-D-glucose units from the non-reducing ends of (1-&gt;3)-beta-D-glucans, releasing alpha-glucose.. Its function is as follows. Beta-glucanases participate in the metabolism of beta-glucan, the main structural component of the cell wall. It could also function biosynthetically as a transglycosylase. The polypeptide is Glucan 1,3-beta-glucosidase 1 (exg1) (Schizosaccharomyces pombe (strain 972 / ATCC 24843) (Fission yeast)).